Reading from the N-terminus, the 227-residue chain is Cytochrome c oxidase subunit 2 (227 aa).

Residues 1-14 (MAYPFQLGLQDATS) lie on the Mitochondrial intermembrane side of the membrane. A helical membrane pass occupies residues 15-45 (PIMEELMNFHDHTLMIVFLISSLVLYIISLM). Over 46–59 (LTTKLTHTSTMDAQ) the chain is Mitochondrial matrix. The chain crosses the membrane as a helical span at residues 60–87 (EVETIWTILPAAILILIALPSLRILYMM). The Mitochondrial intermembrane segment spans residues 88-227 (DEINNPALTV…YFENWSASMI (140 aa)). Cu cation contacts are provided by His161, Cys196, Glu198, Cys200, His204, and Met207. Glu198 lines the Mg(2+) pocket. Residue Tyr218 is modified to Phosphotyrosine.

This sequence belongs to the cytochrome c oxidase subunit 2 family. Component of the cytochrome c oxidase (complex IV, CIV), a multisubunit enzyme composed of 14 subunits. The complex is composed of a catalytic core of 3 subunits MT-CO1, MT-CO2 and MT-CO3, encoded in the mitochondrial DNA, and 11 supernumerary subunits COX4I, COX5A, COX5B, COX6A, COX6B, COX6C, COX7A, COX7B, COX7C, COX8 and NDUFA4, which are encoded in the nuclear genome. The complex exists as a monomer or a dimer and forms supercomplexes (SCs) in the inner mitochondrial membrane with NADH-ubiquinone oxidoreductase (complex I, CI) and ubiquinol-cytochrome c oxidoreductase (cytochrome b-c1 complex, complex III, CIII), resulting in different assemblies (supercomplex SCI(1)III(2)IV(1) and megacomplex MCI(2)III(2)IV(2)). Found in a complex with TMEM177, COA6, COX18, COX20, SCO1 and SCO2. Interacts with TMEM177 in a COX20-dependent manner. Interacts with COX20. Interacts with COX16. The cofactor is Cu cation.

The protein resides in the mitochondrion inner membrane. It carries out the reaction 4 Fe(II)-[cytochrome c] + O2 + 8 H(+)(in) = 4 Fe(III)-[cytochrome c] + 2 H2O + 4 H(+)(out). In terms of biological role, component of the cytochrome c oxidase, the last enzyme in the mitochondrial electron transport chain which drives oxidative phosphorylation. The respiratory chain contains 3 multisubunit complexes succinate dehydrogenase (complex II, CII), ubiquinol-cytochrome c oxidoreductase (cytochrome b-c1 complex, complex III, CIII) and cytochrome c oxidase (complex IV, CIV), that cooperate to transfer electrons derived from NADH and succinate to molecular oxygen, creating an electrochemical gradient over the inner membrane that drives transmembrane transport and the ATP synthase. Cytochrome c oxidase is the component of the respiratory chain that catalyzes the reduction of oxygen to water. Electrons originating from reduced cytochrome c in the intermembrane space (IMS) are transferred via the dinuclear copper A center (CU(A)) of subunit 2 and heme A of subunit 1 to the active site in subunit 1, a binuclear center (BNC) formed by heme A3 and copper B (CU(B)). The BNC reduces molecular oxygen to 2 water molecules using 4 electrons from cytochrome c in the IMS and 4 protons from the mitochondrial matrix. This Lemniscomys barbarus (Barbary striped grass mouse) protein is Cytochrome c oxidase subunit 2 (MT-CO2).